Reading from the N-terminus, the 764-residue chain is Palmitoyltransferase AKR1 (764 aa).

2 disordered regions span residues 1–38 (MVNE…GDSN) and 51–71 (SGNE…AEED). Topologically, residues 1-321 (MVNELENVPR…IKKWFKKSQH (321 aa)) are cytoplasmic. Residues 10 to 27 (RASTLTNEEQTVDPSNND) show a composition bias toward polar residues. Serine 51 and serine 57 each carry phosphoserine. ANK repeat units lie at residues 72–102 (PLLT…EVNN), 108–137 (EHIT…DVNA), 142–171 (LHAT…DPTM), 175–204 (QGFN…SKGL), 213–242 (KGRT…SIKI), and 246–275 (EGFT…DFFQ). The chain crosses the membrane as a helical span at residues 322 to 341 (AKLVTFITPFLFLGIAFALF). The Lumenal segment spans residues 342 to 346 (SHINP). A helical transmembrane segment spans residues 347–364 (LFVIIVLFLLAIATNKGL). At 365–384 (NKFVLPSYGRMGVHNVTLLR) the chain is on the cytoplasmic side. The chain crosses the membrane as a helical span at residues 385 to 405 (SPLLSGVFFGTLLWVTIVWFF). Topologically, residues 406-418 (KVMPRTFSDEQYT) are lumenal. A helical membrane pass occupies residues 419 to 439 (NILMLVILVSVFYLFGQLVIM). At 440–513 (DPGCLPEETD…FNDVGLKNHK (74 aa)) the chain is on the cytoplasmic side. The DHHC domain maps to 470-520 (NFCIETWIRKPLRSKFSPLNNAVVARFDHYCPWIFNDVGLKNHKAFIFFIT). Cysteine 500 (S-palmitoyl cysteine intermediate) is an active-site residue. The helical transmembrane segment at 514 to 534 (AFIFFITLMESGIFTFLALCL) threads the bilayer. Residues 535–570 (EYFDELEDAHEDTSQKNGKCFILGASDLCSGLIYDR) lie on the Lumenal side of the membrane. A helical transmembrane segment spans residues 571–591 (FVFLILLWALLQSIWVASLIF). Residues 592-764 (VQAFQICKGM…KDVEQGNDMV (173 aa)) lie on the Cytoplasmic side of the membrane.

This sequence belongs to the DHHC palmitoyltransferase family. AKR/ZDHHC17 subfamily.

It is found in the early endosome membrane. The protein resides in the golgi apparatus membrane. It catalyses the reaction L-cysteinyl-[protein] + hexadecanoyl-CoA = S-hexadecanoyl-L-cysteinyl-[protein] + CoA. Palmitoyltransferase specific for casein kinase 1. Palmitoylates isoforms YCK1 and YCK2 at both C-terminal cysteine residues, which is required for their proper plasma membrane localization. Required for constitutive endocytosis of a-factor receptor STE3 and both constitutive and pheromone-induced endocytosis of alpha-factor receptor STE2. The polypeptide is Palmitoyltransferase AKR1 (AKR1) (Saccharomyces cerevisiae (strain ATCC 204508 / S288c) (Baker's yeast)).